We begin with the raw amino-acid sequence, 449 residues long: Xylose isomerase (449 aa).

Residues His101 and Asp104 contribute to the active site. Mg(2+) is bound by residues Glu232, Glu268, His271, Asp296, Asp307, Asp309, and Asp340.

It belongs to the xylose isomerase family. As to quaternary structure, homotetramer. The cofactor is Mg(2+).

Its subcellular location is the cytoplasm. It catalyses the reaction alpha-D-xylose = alpha-D-xylulofuranose. This chain is Xylose isomerase, found in Bifidobacterium longum (strain NCC 2705).